Here is a 287-residue protein sequence, read N- to C-terminus: Hydroxysteroid 11-beta-dehydrogenase 1-like protein (287 aa).

Positions 1-22 are cleaved as a signal peptide; the sequence is MKLYAKLLLCSICVAFIAVRWS. NADP(+) contacts are provided by residues 40 to 66, 91 to 92, and 118 to 120; these read GAST…TARR, DM, and NHI. S169 provides a ligand contact to substrate. Residue Y182 is the Proton acceptor of the active site. NADP(+) contacts are provided by residues 182–186 and 215–221; these read YASTK and GLIDTDS.

Belongs to the short-chain dehydrogenases/reductases (SDR) family.

The protein localises to the secreted. It carries out the reaction cortisone + NADPH + H(+) = cortisol + NADP(+). Functionally, unidirectional NADP(+)-dependent cortisol dehydrogenase (in vitro). The chain is Hydroxysteroid 11-beta-dehydrogenase 1-like protein (hsd11b1l) from Danio rerio (Zebrafish).